A 367-amino-acid polypeptide reads, in one-letter code: sn-glycerol-3-phosphate import ATP-binding protein UgpC (367 aa).

The region spanning Leu-4–Ile-235 is the ABC transporter domain. Gly-37–Ser-44 contacts ATP.

The protein belongs to the ABC transporter superfamily. sn-glycerol-3-phosphate importer (TC 3.A.1.1.3) family. The complex is composed of two ATP-binding proteins (UgpC), two transmembrane proteins (UgpA and UgpE) and a solute-binding protein (UgpB).

The protein resides in the cell inner membrane. It carries out the reaction sn-glycerol 3-phosphate(out) + ATP + H2O = sn-glycerol 3-phosphate(in) + ADP + phosphate + H(+). Its function is as follows. Part of the ABC transporter complex UgpBAEC involved in sn-glycerol-3-phosphate (G3P) import. Responsible for energy coupling to the transport system. The polypeptide is sn-glycerol-3-phosphate import ATP-binding protein UgpC (Cupriavidus metallidurans (strain ATCC 43123 / DSM 2839 / NBRC 102507 / CH34) (Ralstonia metallidurans)).